The sequence spans 341 residues: uncharacterized protein (341 aa).

The tract at residues 125-146 is disordered; it reads DTVKHNGSGPRPEQASSHVHYS.

This sequence belongs to the cycloisomerase 2 family.

This is an uncharacterized protein from Lactococcus lactis subsp. cremoris (strain MG1363).